Reading from the N-terminus, the 267-residue chain is tRNA-cytidine(32) 2-sulfurtransferase 2 (267 aa).

Positions 42 to 47 (SGGKDS) match the PP-loop motif motif. 3 residues coordinate [4Fe-4S] cluster: cysteine 117, cysteine 120, and cysteine 208.

This sequence belongs to the TtcA family. As to quaternary structure, homodimer. Mg(2+) serves as cofactor. Requires [4Fe-4S] cluster as cofactor.

Its subcellular location is the cytoplasm. It carries out the reaction cytidine(32) in tRNA + S-sulfanyl-L-cysteinyl-[cysteine desulfurase] + AH2 + ATP = 2-thiocytidine(32) in tRNA + L-cysteinyl-[cysteine desulfurase] + A + AMP + diphosphate + H(+). It functions in the pathway tRNA modification. Functionally, catalyzes the ATP-dependent 2-thiolation of cytidine in position 32 of tRNA, to form 2-thiocytidine (s(2)C32). The sulfur atoms are provided by the cysteine/cysteine desulfurase (IscS) system. This is tRNA-cytidine(32) 2-sulfurtransferase 2 from Francisella tularensis subsp. holarctica (strain FTNF002-00 / FTA).